Consider the following 1436-residue polypeptide: MAP kinase kinase kinase win1 (1436 aa).

The interval Leu-56–Lys-85 is disordered. The span at Ser-76–Lys-85 shows a compositional bias: basic and acidic residues. Residue Ser-224 is modified to Phosphoserine. Thr-226 bears the Phosphothreonine mark. The interval Glu-282–Gly-1123 is interaction with tea4. The region spanning Trp-1120 to Val-1406 is the Protein kinase domain. ATP contacts are provided by residues Ile-1126–Val-1134 and Lys-1149. Asp-1244 functions as the Proton acceptor in the catalytic mechanism.

It belongs to the protein kinase superfamily. STE Ser/Thr protein kinase family. MAP kinase kinase kinase subfamily. As to quaternary structure, interacts with tea4.

The enzyme catalyses L-seryl-[protein] + ATP = O-phospho-L-seryl-[protein] + ADP + H(+). The catalysed reaction is L-threonyl-[protein] + ATP = O-phospho-L-threonyl-[protein] + ADP + H(+). Its function is as follows. Involved in a signal transduction pathway that is activated by changes in the osmolarity of the extracellular environment. Activates the wis1 MAP kinase kinase by phosphorylation. This is MAP kinase kinase kinase win1 (win1) from Schizosaccharomyces pombe (strain 972 / ATCC 24843) (Fission yeast).